We begin with the raw amino-acid sequence, 146 residues long: 3-dehydroquinate dehydratase (146 aa).

Y24 acts as the Proton acceptor in catalysis. Substrate is bound by residues N75, H81, and D88. The Proton donor role is filled by H101. Residues 102–103 (LS) and R112 each bind substrate.

It belongs to the type-II 3-dehydroquinase family. In terms of assembly, homododecamer.

It catalyses the reaction 3-dehydroquinate = 3-dehydroshikimate + H2O. It functions in the pathway metabolic intermediate biosynthesis; chorismate biosynthesis; chorismate from D-erythrose 4-phosphate and phosphoenolpyruvate: step 3/7. In terms of biological role, catalyzes a trans-dehydration via an enolate intermediate. The polypeptide is 3-dehydroquinate dehydratase (Maricaulis maris (strain MCS10) (Caulobacter maris)).